The primary structure comprises 431 residues: Glutamate-1-semialdehyde 2,1-aminomutase (431 aa).

Lys-265 is subject to N6-(pyridoxal phosphate)lysine.

Belongs to the class-III pyridoxal-phosphate-dependent aminotransferase family. HemL subfamily. In terms of assembly, homodimer. Requires pyridoxal 5'-phosphate as cofactor.

It is found in the cytoplasm. It catalyses the reaction (S)-4-amino-5-oxopentanoate = 5-aminolevulinate. Its pathway is porphyrin-containing compound metabolism; protoporphyrin-IX biosynthesis; 5-aminolevulinate from L-glutamyl-tRNA(Glu): step 2/2. This chain is Glutamate-1-semialdehyde 2,1-aminomutase, found in Vibrio vulnificus (strain CMCP6).